A 243-amino-acid chain; its full sequence is Tryptophan synthase alpha chain (243 aa).

Residues E31 and D42 each act as proton acceptor in the active site.

It belongs to the TrpA family. Tetramer of two alpha and two beta chains.

It catalyses the reaction (1S,2R)-1-C-(indol-3-yl)glycerol 3-phosphate + L-serine = D-glyceraldehyde 3-phosphate + L-tryptophan + H2O. It participates in amino-acid biosynthesis; L-tryptophan biosynthesis; L-tryptophan from chorismate: step 5/5. Functionally, the alpha subunit is responsible for the aldol cleavage of indoleglycerol phosphate to indole and glyceraldehyde 3-phosphate. In Staphylococcus epidermidis (strain ATCC 35984 / DSM 28319 / BCRC 17069 / CCUG 31568 / BM 3577 / RP62A), this protein is Tryptophan synthase alpha chain.